Consider the following 320-residue polypeptide: uncharacterized protein (320 aa).

Positions alanine 13–glutamate 132 constitute an Arf-GAP domain. The C4-type zinc finger occupies cysteine 28 to cysteine 52. Disordered regions lie at residues asparagine 153–glutamine 212, arginine 227–phenylalanine 261, and asparagine 284–lysine 320. Residues threonine 154 to threonine 176 are compositionally biased toward low complexity. Composition is skewed to polar residues over residues serine 183–threonine 210 and proline 228–leucine 244. Low complexity-rich tracts occupy residues proline 245–proline 257 and serine 295–serine 310.

The protein resides in the cytoplasm. It localises to the golgi apparatus. GTPase-activating protein for the ADP ribosylation factor family. This is an uncharacterized protein from Schizosaccharomyces pombe (strain 972 / ATCC 24843) (Fission yeast).